The chain runs to 118 residues: Basic phospholipase A2 PA-9C (118 aa).

Intrachain disulfides connect cysteine 11–cysteine 71, cysteine 27–cysteine 117, cysteine 29–cysteine 45, cysteine 44–cysteine 98, cysteine 51–cysteine 91, cysteine 60–cysteine 84, and cysteine 78–cysteine 89. Ca(2+) is bound by residues tyrosine 28, glycine 30, and glycine 32. Residue histidine 48 is part of the active site. Aspartate 49 contributes to the Ca(2+) binding site. The active site involves aspartate 92.

It belongs to the phospholipase A2 family. Group I subfamily. D49 sub-subfamily. Ca(2+) serves as cofactor. In terms of tissue distribution, expressed by the venom gland.

It localises to the secreted. The catalysed reaction is a 1,2-diacyl-sn-glycero-3-phosphocholine + H2O = a 1-acyl-sn-glycero-3-phosphocholine + a fatty acid + H(+). PLA2 catalyzes the calcium-dependent hydrolysis of the 2-acyl groups in 3-sn-phosphoglycerides. This is Basic phospholipase A2 PA-9C from Pseudechis australis (Mulga snake).